The chain runs to 197 residues: Probable GTP-binding protein EngB (197 aa).

The 174-residue stretch at 22–195 folds into the EngB-type G domain; sequence NLPEIAFVGR…VDYLFDDLVE (174 aa). Residues 30–37, 57–61, 75–78, 142–145, and 174–176 contribute to the GTP site; these read GRSNVGKS, GKTRL, DLPG, TKSD, and FSS. The Mg(2+) site is built by S37 and T59.

It belongs to the TRAFAC class TrmE-Era-EngA-EngB-Septin-like GTPase superfamily. EngB GTPase family. The cofactor is Mg(2+).

Its function is as follows. Necessary for normal cell division and for the maintenance of normal septation. This is Probable GTP-binding protein EngB from Clostridium perfringens (strain 13 / Type A).